A 578-amino-acid polypeptide reads, in one-letter code: Nuclear receptor subfamily 1 group D member 2 (578 aa).

The interval 1-60 (MELNAGGVIAYISSSSSASSPASCHSEGSENSFQSSSSSVPSSPNSSNCDANGNPKNTDV) is required for phosphorylation by CSNK1E and cytoplasmic localization. Residues 1-99 (MELNAGGVIA…HSGMTKFSGM (99 aa)) are modulating. The span at 13–47 (SSSSSASSPASCHSEGSENSFQSSSSSVPSSPNSS) shows a compositional bias: low complexity. A disordered region spans residues 13-89 (SSSSSASSPA…KPGAPGMTKS (77 aa)). The residue at position 46 (Ser46) is a Phosphoserine; by GSK3-beta. Positions 48–61 (NCDANGNPKNTDVS) are enriched in polar residues. Residues 100-176 (VLLCKVCGDV…VGMSRDAVRF (77 aa)) constitute a DNA-binding region (nuclear receptor). 2 consecutive NR C4-type zinc fingers follow at residues 103 to 123 (CKVC…CEGC) and 140 to 164 (CLKN…FKKC). An N6-acetyllysine; by KAT5 mark is found at Lys162 and Lys163. Residues 214 to 247 (EPHEQSVPPAQEQLRPKPQLEQENIKSTPPPSDF) form a disordered region. The segment covering 227–237 (LRPKPQLEQEN) has biased composition (basic and acidic residues). 2 disulfide bridges follow: Cys336-Cys342 and Cys373-Cys383. The 211-residue stretch at 368–578 (RNSYLCSTGG…EELLAFKVHP (211 aa)) folds into the NR LBD domain. Residues Cys383 and His567 each contribute to the heme site. An interaction with ZNHIT1 region spans residues 396–578 (SGHEIWEEFS…EELLAFKVHP (183 aa)).

It belongs to the nuclear hormone receptor family. NR1 subfamily. As to quaternary structure, binds DNA as a monomer or a homodimer. Interacts with NCOA5 coactivator, leading to a strong increase of transcription of target genes. Interacts (via N-terminus) with KAT5. Interacts (via C-terminus) with HDAC1. Interacts with ZNHIT1. Interacts with SIAH2. In terms of processing, deacetylated by HDAC1. Acetylation and deacetylation regulate its transcriptional regulatory activity. Post-translationally, under more reducing intracellular redox conditions, Cys-383 is in its heme-bound state, which is optimal for recruitment of the NCOR1/HDAC3 corepressor complex and repression of target genes. When subjected to oxidative stress conditions, Cys-383 undergoes oxidation to form a disulfide bridge with Cys-373, also triggering a ligand switch that results in release of bound heme and derepression of target genes. Ubiquitinated by SIAH2; leading to its proteasomal degradation. In terms of processing, phosphorylated by CSNK1E; phosphorylation enhances its cytoplasmic localization.

Its subcellular location is the nucleus. The protein resides in the cytoplasm. Its activity is regulated as follows. The heme-bound form can bind gaseous signaling molecules such as CO and nitric oxide (NO) and NO can reverse its transcriptional repressor activity. In terms of biological role, transcriptional repressor which coordinates circadian rhythm and metabolic pathways in a heme-dependent manner. Integral component of the complex transcription machinery that governs circadian rhythmicity and forms a critical negative limb of the circadian clock by directly repressing the expression of core clock components BMAL1 and CLOCK. Also regulates genes involved in metabolic functions, including lipid metabolism and the inflammatory response. Acts as a receptor for heme which stimulates its interaction with the NCOR1/HDAC3 corepressor complex, enhancing transcriptional repression. Recognizes two classes of DNA response elements within the promoter of its target genes and can bind to DNA as either monomers or homodimers, depending on the nature of the response element. Binds as a monomer to a response element composed of the consensus half-site motif 5'-[A/G]GGTCA-3' preceded by an A/T-rich 5' sequence (RevRE), or as a homodimer to a direct repeat of the core motif spaced by two nuclegotides (RevDR-2). Acts as a potent competitive repressor of ROR alpha (RORA) function and also negatively regulates the expression of NR1D1. Regulates lipid and energy homeostasis in the skeletal muscle via repression of genes involved in lipid metabolism and myogenesis including: CD36, FABP3, FABP4, UCP3, SCD1 and MSTN. Regulates hepatic lipid metabolism via the repression of APOC3. Represses gene expression at a distance in macrophages by inhibiting the transcription of enhancer-derived RNAs (eRNAs). In addition to its activity as a repressor, can also act as a transcriptional activator. Acts as a transcriptional activator of the sterol regulatory element-binding protein 1 (SREBF1) and the inflammatory mediator interleukin-6 (IL6) in the skeletal muscle. Plays a role in the regulation of circadian sleep/wake cycle; essential for maintaining wakefulness during the dark phase or active period. Key regulator of skeletal muscle mitochondrial function; negatively regulates the skeletal muscle expression of core clock genes and genes involved in mitochondrial biogenesis, fatty acid beta-oxidation and lipid metabolism. May play a role in the circadian control of neutrophilic inflammation in the lung. The chain is Nuclear receptor subfamily 1 group D member 2 from Rattus norvegicus (Rat).